A 536-amino-acid polypeptide reads, in one-letter code: UDP-glucuronosyltransferase 2A2 (536 aa).

Residues 1-15 (MVSIRDFTMPKKFVQ) are Cytoplasmic-facing. The helical transmembrane segment at 16–36 (MLVFNLTLTEVVLSGNVLIWP) threads the bilayer. The Lumenal portion of the chain corresponds to 37–500 (TDGSHWLNIK…TWFQYHSLDV (464 aa)). Residues Asn58, Asn322, and Asn356 are each glycosylated (N-linked (GlcNAc...) asparagine). Residues 501–521 (IGFLLVCVTTAIFLVIQCCLF) traverse the membrane as a helical segment. The Cytoplasmic portion of the chain corresponds to 522–536 (SCQKFGKIGKKKKRE).

It belongs to the UDP-glycosyltransferase family. As to expression, mainly expressed in the nasal mucosa.

The protein localises to the endoplasmic reticulum membrane. The catalysed reaction is glucuronate acceptor + UDP-alpha-D-glucuronate = acceptor beta-D-glucuronoside + UDP + H(+). It carries out the reaction 17alpha-estradiol + UDP-alpha-D-glucuronate = 17alpha-estradiol 3-O-(beta-D-glucuronate) + UDP + H(+). The enzyme catalyses 17beta-estradiol + UDP-alpha-D-glucuronate = 17beta-estradiol 3-O-(beta-D-glucuronate) + UDP + H(+). It catalyses the reaction chenodeoxycholate + UDP-alpha-D-glucuronate = chenodeoxycholoyl-24-O-(beta-D-glucuronate) + UDP. The catalysed reaction is lithocholate + UDP-alpha-D-glucuronate = lithocholoyl-24-O-(beta-D-glucuronate) + UDP. It carries out the reaction deoxycholate + UDP-alpha-D-glucuronate = deoxycholoyl-24-O-(beta-D-glucuronate) + UDP. The enzyme catalyses hyocholate + UDP-alpha-D-glucuronate = hyocholoyl-24-O-(beta-D-glucuronate) + UDP. It catalyses the reaction hyodeoxycholate + UDP-alpha-D-glucuronate = hyodeoxycholate 6-O-(beta-D-glucuronate) + UDP + H(+). Functionally, UDP-glucuronosyltransferase (UGT) that catalyzes phase II biotransformation reactions in which lipophilic substrates are conjugated with glucuronic acid to increase the metabolite's water solubility, thereby facilitating excretion into either the urine or bile. Essential for the elimination and detoxification of drugs, xenobiotics and endogenous compounds. Catalyzes the glucuronidation of endogenous estrogen hormone estradiol. Contributes to bile acid (BA) detoxification by catalyzing the glucuronidation of BA substrates, which are natural detergents for dietary lipids absorption. Shows a potential role in detoxification of toxic waste compounds in the amniotic fluid before birth, and air-born chemical after birth. The protein is UDP-glucuronosyltransferase 2A2 of Homo sapiens (Human).